The sequence spans 354 residues: MTKSVIKTVEWSDEGVVLVDQTKLPTEEVYVTCGTYEEVAVAIKDMIVRGAPAIGVTAAMGIALGVRDAKASTLSELRQMFGMICRTMGETRPTAVNLFWAIRRMQRKFEELSNMPLAVIKAEMVFEAKRIHLEDIAANQAMGRNGAVLMPSEGGVLTHCNAGALATAGYGTALGVIRAAVESGKNIRVFADETRPFLQGARLTAWELMKDGIDTTVISDNMAGAMMAQGKIQAVVVGADRIAANGDVANKIGTYTVAVLAKEHGIPFYVAAPWSTIDLDTPDGSKIPIEQRNGREVTHIAGKQMTPDNVRIENPAFDVTPSKYVTAIITERGVAKAPYDESLRKLAETETVSA.

Residues R49 to A51, R92, and Q199 contribute to the substrate site. D240 acts as the Proton donor in catalysis. Substrate is bound at residue N250–K251.

Belongs to the eIF-2B alpha/beta/delta subunits family. MtnA subfamily.

The catalysed reaction is 5-(methylsulfanyl)-alpha-D-ribose 1-phosphate = 5-(methylsulfanyl)-D-ribulose 1-phosphate. It functions in the pathway amino-acid biosynthesis; L-methionine biosynthesis via salvage pathway; L-methionine from S-methyl-5-thio-alpha-D-ribose 1-phosphate: step 1/6. Its function is as follows. Catalyzes the interconversion of methylthioribose-1-phosphate (MTR-1-P) into methylthioribulose-1-phosphate (MTRu-1-P). In Koribacter versatilis (strain Ellin345), this protein is Methylthioribose-1-phosphate isomerase.